A 305-amino-acid polypeptide reads, in one-letter code: Methionyl-tRNA formyltransferase (305 aa).

A (6S)-5,6,7,8-tetrahydrofolate-binding site is contributed by 111-114 (SLLP).

The protein belongs to the Fmt family.

It carries out the reaction L-methionyl-tRNA(fMet) + (6R)-10-formyltetrahydrofolate = N-formyl-L-methionyl-tRNA(fMet) + (6S)-5,6,7,8-tetrahydrofolate + H(+). Functionally, attaches a formyl group to the free amino group of methionyl-tRNA(fMet). The formyl group appears to play a dual role in the initiator identity of N-formylmethionyl-tRNA by promoting its recognition by IF2 and preventing the misappropriation of this tRNA by the elongation apparatus. This chain is Methionyl-tRNA formyltransferase, found in Helicobacter pylori (strain J99 / ATCC 700824) (Campylobacter pylori J99).